Consider the following 63-residue polypeptide: Conotoxin Lt11.1 (63 aa).

The signal sequence occupies residues 1-23 (MMFRLTSVLLVIVLLNLVVLTNA). 4 disulfide bridges follow: cysteine 24–cysteine 34, cysteine 28–cysteine 39, cysteine 33–cysteine 42, and cysteine 38–cysteine 47. A propeptide spanning residues 53-63 (ALLQRLLGHQR) is cleaved from the precursor.

Belongs to the conotoxin I2 superfamily. As to expression, expressed by the venom duct.

The protein localises to the secreted. This Conus litteratus (Lettered cone) protein is Conotoxin Lt11.1.